The following is a 250-amino-acid chain: tRNA (guanine-N(1)-)-methyltransferase (250 aa).

S-adenosyl-L-methionine-binding positions include G116 and 136 to 141 (IGDYVL).

The protein belongs to the RNA methyltransferase TrmD family. As to quaternary structure, homodimer.

It localises to the cytoplasm. The enzyme catalyses guanosine(37) in tRNA + S-adenosyl-L-methionine = N(1)-methylguanosine(37) in tRNA + S-adenosyl-L-homocysteine + H(+). In terms of biological role, specifically methylates guanosine-37 in various tRNAs. This is tRNA (guanine-N(1)-)-methyltransferase from Pseudomonas fluorescens (strain SBW25).